The sequence spans 469 residues: Glutamate--tRNA ligase (469 aa).

Residues 11–21 carry the 'HIGH' region motif; the sequence is PSPTGFIHLGN. Residues 118–131 show a composition bias toward basic and acidic residues; it reads GEKPRYDGTWRPEP. The disordered stretch occupies residues 118–139; the sequence is GEKPRYDGTWRPEPGKVLPEPP. Residues 243–247 carry the 'KMSKS' region motif; sequence KMSKR. Lys-246 contributes to the ATP binding site.

It belongs to the class-I aminoacyl-tRNA synthetase family. Glutamate--tRNA ligase type 1 subfamily. As to quaternary structure, monomer.

Its subcellular location is the cytoplasm. The enzyme catalyses tRNA(Glu) + L-glutamate + ATP = L-glutamyl-tRNA(Glu) + AMP + diphosphate. Its function is as follows. Catalyzes the attachment of glutamate to tRNA(Glu) in a two-step reaction: glutamate is first activated by ATP to form Glu-AMP and then transferred to the acceptor end of tRNA(Glu). This chain is Glutamate--tRNA ligase, found in Burkholderia pseudomallei (strain 668).